We begin with the raw amino-acid sequence, 262 residues long: Type III pantothenate kinase (262 aa).

Position 9 to 16 (9 to 16) interacts with ATP; it reads DIGNTNVK. Residues tyrosine 103 and 110 to 113 contribute to the substrate site; that span reads GADR. Aspartate 112 acts as the Proton acceptor in catalysis. Residue aspartate 134 coordinates K(+). Threonine 137 serves as a coordination point for ATP. Residue threonine 190 participates in substrate binding.

The protein belongs to the type III pantothenate kinase family. Homodimer. NH4(+) serves as cofactor. The cofactor is K(+).

It is found in the cytoplasm. The enzyme catalyses (R)-pantothenate + ATP = (R)-4'-phosphopantothenate + ADP + H(+). It participates in cofactor biosynthesis; coenzyme A biosynthesis; CoA from (R)-pantothenate: step 1/5. Functionally, catalyzes the phosphorylation of pantothenate (Pan), the first step in CoA biosynthesis. This Nitratidesulfovibrio vulgaris (strain DSM 19637 / Miyazaki F) (Desulfovibrio vulgaris) protein is Type III pantothenate kinase.